Reading from the N-terminus, the 51-residue chain is Large ribosomal subunit protein eL39 (51 aa).

It belongs to the eukaryotic ribosomal protein eL39 family.

The polypeptide is Large ribosomal subunit protein eL39 (rpl39e) (Pyrococcus abyssi (strain GE5 / Orsay)).